The chain runs to 61 residues: uncharacterized protein (61 aa).

This is an uncharacterized protein from Acidianus bottle-shaped virus (isolate Italy/Pozzuoli) (ABV).